We begin with the raw amino-acid sequence, 1723 residues long: Probable outer membrane protein pmp20 (1723 aa).

Residues 1 to 21 form the signal peptide; it reads MKWLPATAVFAAVLPALTAFG. 2 disordered regions span residues 78-100 and 139-161; these read VTPD…SGAT and LSSS…SASA. Low complexity-rich tracts occupy residues 85–100 and 140–161; these read SSSN…SGAT and SSSS…SASA. An Autotransporter domain is found at 1434–1723; sequence EDPAFNNFWA…MANGGIRFVF (290 aa).

It belongs to the PMP outer membrane protein family.

It is found in the secreted. Its subcellular location is the cell wall. The protein localises to the cell outer membrane. In Chlamydia pneumoniae (Chlamydophila pneumoniae), this protein is Probable outer membrane protein pmp20 (pmp20).